The following is a 413-amino-acid chain: L-cysteine:1D-myo-inositol 2-amino-2-deoxy-alpha-D-glucopyranoside ligase (413 aa).

Cys-15 provides a ligand contact to Zn(2+). L-cysteinyl-5'-AMP is bound by residues 15–18 (CGIT), Thr-30, and 53–55 (NVT). The 'HIGH' region signature appears at 17-27 (ITPYDATHLGH). Positions 155 to 160 (ERGGDP) match the 'ERGGDP' region motif. Trp-195 is an L-cysteinyl-5'-AMP binding site. Zn(2+) is bound at residue Cys-199. Residue 217–219 (GTD) participates in L-cysteinyl-5'-AMP binding. A Zn(2+)-binding site is contributed by His-224. Val-251 serves as a coordination point for L-cysteinyl-5'-AMP. Residues 257 to 261 (KMSKS) carry the 'KMSKS' region motif.

Belongs to the class-I aminoacyl-tRNA synthetase family. MshC subfamily. In terms of assembly, monomer. Zn(2+) serves as cofactor.

The enzyme catalyses 1D-myo-inositol 2-amino-2-deoxy-alpha-D-glucopyranoside + L-cysteine + ATP = 1D-myo-inositol 2-(L-cysteinylamino)-2-deoxy-alpha-D-glucopyranoside + AMP + diphosphate + H(+). Its function is as follows. Catalyzes the ATP-dependent condensation of GlcN-Ins and L-cysteine to form L-Cys-GlcN-Ins. The chain is L-cysteine:1D-myo-inositol 2-amino-2-deoxy-alpha-D-glucopyranoside ligase from Frankia alni (strain DSM 45986 / CECT 9034 / ACN14a).